A 380-amino-acid chain; its full sequence is MASRDSLGEVFRVSIFGESHGPGVGALVTGVPPGLEVDEAYINRELERRRPGGPYASPRREADRVEILSGVFRGRTTGAPILLFIRNVDVKPGFYEEFRYKPRPGHADYVAYERYLGHQDYRGGGIFSGRRTAALVAAGAIAKLVLARYGVRVYAYVKSIGGVEARVEPRDSEEFRRAIDRDPLKCPDPEASERMRRLVEEARREGDSLGSVVEAVAFNVPPGLGDPPLGGVDALLARAVMAIPAAKAVEFGEGFALAFMRGSEAHDSPRAVGGRIVHETNRSGGIVGGLTNGMPIVFRVAFKPPSSIPKPRRTVDLRSLGEAWVSGKGRHDPVIGPRAAPVVEAVTAIVLADLLLLREALLPEWVEDLRPWTRGEAGGD.

NADP(+) is bound at residue arginine 49. Residues glycine 288, 303 to 307 (KPPSS), and arginine 330 each bind FMN.

The protein belongs to the chorismate synthase family. FMNH2 serves as cofactor.

The catalysed reaction is 5-O-(1-carboxyvinyl)-3-phosphoshikimate = chorismate + phosphate. The protein operates within metabolic intermediate biosynthesis; chorismate biosynthesis; chorismate from D-erythrose 4-phosphate and phosphoenolpyruvate: step 7/7. In terms of biological role, catalyzes the anti-1,4-elimination of the C-3 phosphate and the C-6 proR hydrogen from 5-enolpyruvylshikimate-3-phosphate (EPSP) to yield chorismate, which is the branch point compound that serves as the starting substrate for the three terminal pathways of aromatic amino acid biosynthesis. This reaction introduces a second double bond into the aromatic ring system. In Aeropyrum pernix (strain ATCC 700893 / DSM 11879 / JCM 9820 / NBRC 100138 / K1), this protein is Chorismate synthase.